Here is a 434-residue protein sequence, read N- to C-terminus: Putative G3BP-like protein (434 aa).

The region spanning isoleucine 18–phenylalanine 134 is the NTF2 domain. Disordered stretches follow at residues glutamate 141–tyrosine 180 and valine 274–glutamine 308. Serine 145 carries the phosphoserine modification. Residues alanine 148 to alanine 157 are compositionally biased toward basic and acidic residues. Over residues serine 276–valine 291 the composition is skewed to low complexity. Polar residues predominate over residues alanine 296–glutamine 308. The RRM domain maps to threonine 315–arginine 386. Positions glycine 390–asparagine 434 are disordered. Over residues phenylalanine 419 to threonine 428 the composition is skewed to basic and acidic residues.

Functionally, probable scaffold protein that may be involved in mRNA transport. This chain is Putative G3BP-like protein (nxt3), found in Schizosaccharomyces pombe (strain 972 / ATCC 24843) (Fission yeast).